A 141-amino-acid polypeptide reads, in one-letter code: MEMLQGLLLWLLLNVGGVWASRGPLRPLCRPINATLAAENEACPVCVTFTTTICAGYCPSMVRVLPAILPPMPQPVCTYHELHFASIRLPGCPPGVDPMVSFPVALSCRCGPCRLSNSDCGGPRAQPLACDRPPLPGLLFL.

The first 20 residues, 1–20, serve as a signal peptide directing secretion; the sequence is MEMLQGLLLWLLLNVGGVWA. 6 cysteine pairs are disulfide-bonded: C29–C77, C43–C92, C46–C130, C54–C108, C58–C110, and C113–C120. N33 is a glycosylation site (N-linked (GlcNAc...) asparagine).

The protein belongs to the glycoprotein hormones subunit beta family. As to quaternary structure, heterodimer of a common alpha chain and a unique beta chain which confers biological specificity to thyrotropin, lutropin, follitropin and gonadotropin.

The protein resides in the secreted. Functionally, promotes spermatogenesis and ovulation by stimulating the testes and ovaries to synthesize steroids. This chain is Lutropin subunit beta (LHB), found in Ailurus fulgens (Himalayan red panda).